The following is a 308-amino-acid chain: D-alanine--D-alanine ligase (308 aa).

An ATP-grasp domain is found at 106 to 305 (KMLWKAFGLP…FEQLVVKILE (200 aa)). 136 to 191 (VEKLGLPLMVKPSLEGSSVGLTKVNAIDDLKSAVEFALQYDETVLIEEWLSGDELT) contributes to the ATP binding site. Mg(2+) contacts are provided by aspartate 259, glutamate 272, and asparagine 274.

This sequence belongs to the D-alanine--D-alanine ligase family. The cofactor is Mg(2+). Mn(2+) is required as a cofactor.

It is found in the cytoplasm. The enzyme catalyses 2 D-alanine + ATP = D-alanyl-D-alanine + ADP + phosphate + H(+). It participates in cell wall biogenesis; peptidoglycan biosynthesis. Cell wall formation. This Histophilus somni (strain 2336) (Haemophilus somnus) protein is D-alanine--D-alanine ligase.